Reading from the N-terminus, the 234-residue chain is MPTYIKRHLRSLAVPRTWPVPRKSRGYWIVKPSPGPHSKEFAMPIAVWLRDYLGLAENMREVRYLLNNGKVLVDGRPIKDYKFPVGLFDVLAIPEINEYYRVLLDERGKLYLKKIDKEEANIKYGKIIRKVSVRGGKIQYTLTDGRTFLGDNSYKTHYGVVYEIPNFKIREVIPLEKDRKAYIIRGKHTGRIGVIKEVIKTDMPWPNIVRLEVAGEVGETWLDNIIPVPENFEA.

Positions 43-106 (MPIAVWLRDY…NEYYRVLLDE (64 aa)) constitute an S4 RNA-binding domain.

This sequence belongs to the eukaryotic ribosomal protein eS4 family.

This is Small ribosomal subunit protein eS4 from Nanoarchaeum equitans (strain Kin4-M).